The sequence spans 475 residues: Ribulose bisphosphate carboxylase large chain (475 aa).

Positions 1 to 2 are excised as a propeptide; it reads MS. Position 3 is an N-acetylproline (Pro3). Position 14 is an N6,N6,N6-trimethyllysine (Lys14). Residues Asn123 and Thr173 each contribute to the substrate site. Lys175 (proton acceptor) is an active-site residue. Lys177 is a binding site for substrate. 3 residues coordinate Mg(2+): Lys201, Asp203, and Glu204. Lys201 is modified (N6-carboxylysine). Residue His294 is the Proton acceptor of the active site. Arg295, His327, and Ser379 together coordinate substrate.

The protein belongs to the RuBisCO large chain family. Type I subfamily. Heterohexadecamer of 8 large chains and 8 small chains; disulfide-linked. The disulfide link is formed within the large subunit homodimers. Mg(2+) serves as cofactor. Post-translationally, the disulfide bond which can form in the large chain dimeric partners within the hexadecamer appears to be associated with oxidative stress and protein turnover.

The protein localises to the plastid. It localises to the chloroplast. It carries out the reaction 2 (2R)-3-phosphoglycerate + 2 H(+) = D-ribulose 1,5-bisphosphate + CO2 + H2O. The catalysed reaction is D-ribulose 1,5-bisphosphate + O2 = 2-phosphoglycolate + (2R)-3-phosphoglycerate + 2 H(+). Functionally, ruBisCO catalyzes two reactions: the carboxylation of D-ribulose 1,5-bisphosphate, the primary event in carbon dioxide fixation, as well as the oxidative fragmentation of the pentose substrate in the photorespiration process. Both reactions occur simultaneously and in competition at the same active site. The protein is Ribulose bisphosphate carboxylase large chain of Calycanthus floridus var. glaucus (Eastern sweetshrub).